The primary structure comprises 584 residues: Membrane frizzled-related protein (584 aa).

Residues 1 to 69 lie on the Cytoplasmic side of the membrane; that stretch reads MKDYDDVILR…QPDCHFSWFC (69 aa). A helical; Signal-anchor for type II membrane protein transmembrane segment spans residues 70 to 90; that stretch reads ILLLSGLLLLLLGLLVAVILA. The Extracellular segment spans residues 91-584; it reads QLQATSLPRT…AASLEACSQP (494 aa). The interval 108–140 is disordered; that stretch reads RGLTPMGVIPSTTPNTTTTTTTTTPARTGQQEA. Low complexity predominate over residues 119-132; sequence TTPNTTTTTTTTTP. Intrachain disulfides connect C150–C176 and C203–C222. Positions 150–259 constitute a CUB 1 domain; it reads CGGLLPGPSG…SGFQAWYQAV (110 aa). N-linked (GlcNAc...) asparagine glycosylation is present at N233. Residues 265 to 301 form the LDL-receptor class A 1 domain; that stretch reads SCAHNEFHCDLLLCLKRDSVCDGITECADGSDEANCS. Cystine bridges form between C266–C278, C273–C291, C285–C300, C307–C333, and C360–C383. The CUB 2 domain maps to 307 to 420; that stretch reads CGGNLTGLYG…GGFLATYQAI (114 aa). N421 is a glycosylation site (N-linked (GlcNAc...) asparagine). Positions 426 to 460 constitute an LDL-receptor class A 2 domain; it reads GCPWAEFCQSGGYRDLQWMCDLWKDCANDSNDNCS. Cystine bridges form between C433–C451, C445–C459, C471–C533, C479–C526, C517–C554, C543–C581, and C547–C569. The N-linked (GlcNAc...) asparagine glycan is linked to N458. Residues 466–584 form the FZ domain; the sequence is QPDLTCEPVQ…AASLEACSQP (119 aa).

In terms of assembly, interacts with C1QTNF5. Expressed in retinal pigment epithelium and ciliary epithelium of the eye.

The protein localises to the apical cell membrane. May play a role in eye development. The chain is Membrane frizzled-related protein (Mfrp) from Mus musculus (Mouse).